Reading from the N-terminus, the 216-residue chain is NADH-quinone oxidoreductase subunit C (216 aa).

This sequence belongs to the complex I 30 kDa subunit family. As to quaternary structure, NDH-1 is composed of 14 different subunits. Subunits NuoB, C, D, E, F, and G constitute the peripheral sector of the complex.

The protein resides in the cell inner membrane. It catalyses the reaction a quinone + NADH + 5 H(+)(in) = a quinol + NAD(+) + 4 H(+)(out). NDH-1 shuttles electrons from NADH, via FMN and iron-sulfur (Fe-S) centers, to quinones in the respiratory chain. The immediate electron acceptor for the enzyme in this species is believed to be ubiquinone. Couples the redox reaction to proton translocation (for every two electrons transferred, four hydrogen ions are translocated across the cytoplasmic membrane), and thus conserves the redox energy in a proton gradient. This Francisella tularensis subsp. holarctica (strain FTNF002-00 / FTA) protein is NADH-quinone oxidoreductase subunit C.